A 60-amino-acid polypeptide reads, in one-letter code: LKCKKLVPLFSKTCPPGKNLCYKMFMVATPKVPVKRECIDVCPKSSLLVKYVCCNTDKCN.

Disulfide bonds link cysteine 3–cysteine 21, cysteine 14–cysteine 38, cysteine 42–cysteine 53, and cysteine 54–cysteine 59.

This sequence belongs to the three-finger toxin family. Short-chain subfamily. Type IA cytotoxin sub-subfamily. Monomer in solution; Homodimer and oligomer in the presence of negatively charged lipids forming a pore with a size ranging between 20 and 30 Angstroms. Expressed by the venom gland.

It is found in the secreted. It localises to the target cell membrane. Its function is as follows. Shows cytolytic activity on many different cells by forming pore in lipid membranes. In vivo, increases heart rate or kills the animal by cardiac arrest. In addition, it binds to heparin with high affinity, interacts with Kv channel-interacting protein 1 (KCNIP1) in a calcium-independent manner, and binds to integrin alpha-V/beta-3 (ITGAV/ITGB3) with moderate affinity. This Naja atra (Chinese cobra) protein is Cytotoxin SP15c.